The chain runs to 135 residues: Probable transporter PD_1892 (135 aa).

4 helical membrane-spanning segments follow: residues 4–24 (YWYPILGGILLGLSTVMLLLL), 45–65 (AQNIPFVVGLVLGPLLFTVIF), 71–91 (VTVAATWPTIIVAGLLVGLGT), and 114–134 (IVATAIFLISGMATATFMGVY).

The protein belongs to the TsuA/YedE (TC 9.B.102) family.

Its subcellular location is the cell inner membrane. This Xylella fastidiosa (strain Temecula1 / ATCC 700964) protein is Probable transporter PD_1892.